The sequence spans 601 residues: Elongation factor 4 (601 aa).

In terms of domain architecture, tr-type G spans 7 to 189 (KNIRNFSIVA…AIVTRLPPPQ (183 aa)). GTP-binding positions include 19–24 (DHGKST) and 136–139 (NKID).

Belongs to the TRAFAC class translation factor GTPase superfamily. Classic translation factor GTPase family. LepA subfamily.

The protein localises to the cell inner membrane. The catalysed reaction is GTP + H2O = GDP + phosphate + H(+). Functionally, required for accurate and efficient protein synthesis under certain stress conditions. May act as a fidelity factor of the translation reaction, by catalyzing a one-codon backward translocation of tRNAs on improperly translocated ribosomes. Back-translocation proceeds from a post-translocation (POST) complex to a pre-translocation (PRE) complex, thus giving elongation factor G a second chance to translocate the tRNAs correctly. Binds to ribosomes in a GTP-dependent manner. In Methylocella silvestris (strain DSM 15510 / CIP 108128 / LMG 27833 / NCIMB 13906 / BL2), this protein is Elongation factor 4.